The following is a 440-amino-acid chain: D-serine dehydratase (440 aa).

Lys116 is subject to N6-(pyridoxal phosphate)lysine.

The protein belongs to the serine/threonine dehydratase family. DsdA subfamily. Monomer. Requires pyridoxal 5'-phosphate as cofactor.

The catalysed reaction is D-serine = pyruvate + NH4(+). In Salmonella dublin (strain CT_02021853), this protein is D-serine dehydratase.